The chain runs to 285 residues: Heterogeneous nuclear ribonucleoprotein A/B (285 aa).

The interval 1–65 is disordered; that stretch reads MSDAAEEQPM…NQNGAEGDQI (65 aa). Positions 25–43 are enriched in low complexity; the sequence is EGEAPVEPSAAAAAPAASA. RRM domains are found at residues 75 to 158 and 159 to 238; these read GKMF…KDPV and KKIF…QPKE. The residue at position 87 (serine 87) is a Phosphoserine. Glycyl lysine isopeptide (Lys-Gly) (interchain with G-Cter in SUMO2) cross-links involve residues lysine 136 and lysine 208. Lysine 220 carries the N6-acetyllysine modification. Residues 239-285 are disordered; it reads VYQQQQYGSGGRGNRNRGNRGSGGGQGSTNYGKSQRRGGHQNNYKPY. Serine 247 is subject to Phosphoserine. Residue arginine 250 is modified to Dimethylated arginine; alternate. Arginine 250 carries the omega-N-methylarginine; alternate modification. An omega-N-methylarginine mark is found at arginine 255 and arginine 258. Position 271 is an N6-acetyllysine (lysine 271). Residue arginine 275 is modified to Dimethylated arginine; alternate. Omega-N-methylarginine; alternate is present on arginine 275. Position 275 is an asymmetric dimethylarginine; alternate (arginine 275).

In terms of assembly, identified in a IGF2BP1-dependent mRNP granule complex containing untranslated mRNAs. Interacts with APOBEC1. Ubiquitous.

It localises to the nucleus. It is found in the cytoplasm. In terms of biological role, transcriptional repressor. Binds to CArG box motifs, single-stranded and double-stranded DNA, and RNA. It may be that repression by CBF-A is a result of competitive binding of CBF, a putative positive factor, and CBF-A to the same or overlapping motifs around the CArG boxes. The sequence is that of Heterogeneous nuclear ribonucleoprotein A/B (Hnrnpab) from Mus musculus (Mouse).